The following is a 226-amino-acid chain: V-type proton ATPase subunit E 1 (226 aa).

The residue at position 2 (Ala-2) is an N-acetylalanine. A Phosphotyrosine modification is found at Tyr-56.

Belongs to the V-ATPase E subunit family. V-ATPase is a heteromultimeric enzyme made up of two complexes: the ATP-hydrolytic V1 complex and the proton translocation V0 complex. The V1 complex consists of three catalytic AB heterodimers that form a heterohexamer, three peripheral stalks each consisting of EG heterodimers, one central rotor including subunits D and F, and the regulatory subunits C and H. The proton translocation complex V0 consists of the proton transport subunit a, a ring of proteolipid subunits c9c'', rotary subunit d, subunits e and f, and the accessory subunits ATP6AP1/Ac45 and ATP6AP2/PRR. Interacts with RABL2/RABL2A; binds preferentially to GTP-bound RABL2. Interacts with ALDOC. Interacts with RAB11B. Expressed within the midpiece of sperm tail (at protein level). Kidney; localizes to early distal nephron, encompassing thick ascending limbs and distal convoluted tubules (at protein level).

The protein localises to the apical cell membrane. It is found in the cytoplasmic vesicle. Its subcellular location is the secretory vesicle. The protein resides in the synaptic vesicle membrane. It localises to the clathrin-coated vesicle membrane. Its function is as follows. Subunit of the V1 complex of vacuolar(H+)-ATPase (V-ATPase), a multisubunit enzyme composed of a peripheral complex (V1) that hydrolyzes ATP and a membrane integral complex (V0) that translocates protons. V-ATPase is responsible for acidifying and maintaining the pH of intracellular compartments and in some cell types, is targeted to the plasma membrane, where it is responsible for acidifying the extracellular environment. This Mus musculus (Mouse) protein is V-type proton ATPase subunit E 1 (Atp6v1e1).